Here is an 80-residue protein sequence, read N- to C-terminus: Trefoil factor 3 (80 aa).

An N-terminal signal peptide occupies residues 1–21 (MAARALCMLGLVLALLSSSSA). One can recognise a P-type domain in the interval 30–73 (NQCAVPAKDRVDCGYPHVTPKECNNRGCCFDSRIPGVPWCFKPL). 3 disulfide bridges follow: C32–C58, C42–C57, and C52–C69.

As to quaternary structure, monomer. Homodimer; disulfide-linked. Expressed in goblet cells of the intestines and colon (at protein level). Expressed by goblet cells of small and large intestinal epithelia and also by the uterus. Also expressed in the hypothalamus where it is detected in paraventricular, periventricular and supraoptic nuclei (at protein level).

The protein localises to the secreted. It localises to the extracellular space. The protein resides in the extracellular matrix. Its subcellular location is the cytoplasm. Functionally, involved in the maintenance and repair of the intestinal mucosa. Promotes the mobility of epithelial cells in healing processes (motogen). This is Trefoil factor 3 (TFF3) from Homo sapiens (Human).